A 999-amino-acid polypeptide reads, in one-letter code: Multiple C2 and transmembrane domain-containing protein 1 (999 aa).

The span at Met1–Ser19 shows a compositional bias: low complexity. A disordered region spans residues Met1–Lys241. Gly residues predominate over residues Arg34–Gly44. Over residues Gly65–Ser79 the composition is skewed to low complexity. A compositionally biased stretch (polar residues) spans Phe92–Cys101. Composition is skewed to low complexity over residues Pro131–Gly141 and Gly149–Ser169. 2 stretches are compositionally biased toward basic and acidic residues: residues Arg175–Arg185 and Arg228–Ser238. 3 C2 domains span residues Ile242–Leu360, Gln452–Leu569, and Gln603–Leu724. Ca(2+) contacts are provided by Asp277, Asp283, Asp330, Asp332, Asp338, Asp486, Asp492, Asp539, Asp541, Asp547, Asp642, Asp648, Asp694, Asp696, and Asp702. The next 2 membrane-spanning stretches (helical) occupy residues Phe811–Leu831 and Pro914–Ile934.

Belongs to the MCTP family. Requires Ca(2+) as cofactor.

Its subcellular location is the cytoplasmic vesicle. It is found in the secretory vesicle. The protein localises to the synaptic vesicle membrane. It localises to the recycling endosome. The protein resides in the endoplasmic reticulum membrane. Its function is as follows. Calcium sensor which is essential for the stabilization of normal baseline neurotransmitter release and for the induction and long-term maintenance of presynaptic homeostatic plasticity. This is Multiple C2 and transmembrane domain-containing protein 1 (MCTP1) from Homo sapiens (Human).